The following is an 820-amino-acid chain: Serine/threonine-protein phosphatase 4 regulatory subunit 3B (820 aa).

The WH1 domain maps to 1–100; the sequence is MSDTRRRVKV…DEIWEKICQV (100 aa). Phosphoserine occurs at positions 117 and 663. The tract at residues 687 to 820 is disordered; the sequence is EDDDEEGKAV…SPRKRPRLGS (134 aa). Residues 701–732 show a composition bias toward basic and acidic residues; sequence EKSKTEDDFPDSYEKFMETKKAKESEDKENLP. Positions 744–789 are enriched in polar residues; the sequence is FSHSPSATNGTNSTNSKSVVSQTTPASSNVASSKTTSLATSVTATK. The span at 798–809 shows a compositional bias: acidic residues; it reads YPDDEEEDEEEE. Position 811 is a phosphoserine (Ser811).

Belongs to the SMEK family. In terms of assembly, serine/threonine-protein phosphatase 4 (PP4) occurs in different assemblies of the catalytic and one or more regulatory subunits. Component of the PP4 complex PPP4C-PPP4R2-PPP4R3B.

It is found in the cytoplasm. It localises to the cytoskeleton. Its subcellular location is the microtubule organizing center. The protein localises to the centrosome. The protein resides in the nucleus. Functionally, regulatory subunit of serine/threonine-protein phosphatase 4 (PP4). May regulate the activity of PPP4C at centrosomal microtubule organizing centers. The sequence is that of Serine/threonine-protein phosphatase 4 regulatory subunit 3B from Mus musculus (Mouse).